Reading from the N-terminus, the 276-residue chain is Phosphate import ATP-binding protein PstB (276 aa).

Positions 23 to 271 (VNNKNIVYDT…PSDQRTEDYI (249 aa)) constitute an ABC transporter domain. 62–69 (GPSGCGKS) contacts ATP.

It belongs to the ABC transporter superfamily. Phosphate importer (TC 3.A.1.7) family. The complex is composed of two ATP-binding proteins (PstB), two transmembrane proteins (PstC and PstA) and a solute-binding protein (PstS).

The protein resides in the cell membrane. The enzyme catalyses phosphate(out) + ATP + H2O = ADP + 2 phosphate(in) + H(+). Part of the ABC transporter complex PstSACB involved in phosphate import. Responsible for energy coupling to the transport system. The chain is Phosphate import ATP-binding protein PstB from Oceanobacillus iheyensis (strain DSM 14371 / CIP 107618 / JCM 11309 / KCTC 3954 / HTE831).